The sequence spans 147 residues: Large-conductance mechanosensitive channel (147 aa).

The next 2 membrane-spanning stretches (helical) occupy residues 14–34 (VVDMAVGIVIGAAFGSIVKSL) and 85–105 (FGLFVNAIISFTIVAFALFMI).

Belongs to the MscL family. Homopentamer.

It localises to the cell inner membrane. Its function is as follows. Channel that opens in response to stretch forces in the membrane lipid bilayer. May participate in the regulation of osmotic pressure changes within the cell. The sequence is that of Large-conductance mechanosensitive channel from Tolumonas auensis (strain DSM 9187 / NBRC 110442 / TA 4).